Here is a 449-residue protein sequence, read N- to C-terminus: Phosphoglucosamine mutase (449 aa).

Ser-101 serves as the catalytic Phosphoserine intermediate. Ser-101, Asp-242, Asp-244, and Asp-246 together coordinate Mg(2+). Ser-101 carries the post-translational modification Phosphoserine.

It belongs to the phosphohexose mutase family. Mg(2+) is required as a cofactor. In terms of processing, activated by phosphorylation.

The enzyme catalyses alpha-D-glucosamine 1-phosphate = D-glucosamine 6-phosphate. In terms of biological role, catalyzes the conversion of glucosamine-6-phosphate to glucosamine-1-phosphate. This chain is Phosphoglucosamine mutase, found in Methylocella silvestris (strain DSM 15510 / CIP 108128 / LMG 27833 / NCIMB 13906 / BL2).